A 464-amino-acid chain; its full sequence is DNA primase DnaG (464 aa).

The Toprim domain maps to 200 to 274 (DSIIVVEGRA…DVDYVARAPE (75 aa)). The Mg(2+) site is built by glutamate 206, aspartate 248, and aspartate 250. Over residues 322 to 332 (NGREEKVREVK) the composition is skewed to basic and acidic residues. The interval 322-359 (NGREEKVREVKPPAPAPAPAPAPKPIEKPEPKEREEKI) is disordered. Over residues 333 to 345 (PPAPAPAPAPAPK) the composition is skewed to pro residues. Basic and acidic residues predominate over residues 346–359 (PIEKPEPKEREEKI).

It belongs to the archaeal DnaG primase family. As to quaternary structure, forms a ternary complex with MCM helicase and DNA. Component of the archaeal exosome complex. Mg(2+) serves as cofactor.

It carries out the reaction ssDNA + n NTP = ssDNA/pppN(pN)n-1 hybrid + (n-1) diphosphate.. Functionally, RNA polymerase that catalyzes the synthesis of short RNA molecules used as primers for DNA polymerase during DNA replication. Also part of the exosome, which is a complex involved in RNA degradation. Acts as a poly(A)-binding protein that enhances the interaction between heteromeric, adenine-rich transcripts and the exosome. This is DNA primase DnaG from Thermococcus onnurineus (strain NA1).